A 674-amino-acid polypeptide reads, in one-letter code: Translation factor GUF1, mitochondrial (674 aa).

The transit peptide at Met1–Lys33 directs the protein to the mitochondrion. A disordered region spans residues Ser32–Glu51. The 183-residue stretch at Gln75–Val257 folds into the tr-type G domain. GTP-binding positions include Ala84–Ser91, Asp150–His154, and Asn204–Asp207.

It belongs to the TRAFAC class translation factor GTPase superfamily. Classic translation factor GTPase family. LepA subfamily.

It localises to the mitochondrion inner membrane. It catalyses the reaction GTP + H2O = GDP + phosphate + H(+). Its function is as follows. Promotes mitochondrial protein synthesis. May act as a fidelity factor of the translation reaction, by catalyzing a one-codon backward translocation of tRNAs on improperly translocated ribosomes. Binds to mitochondrial ribosomes in a GTP-dependent manner. This Lodderomyces elongisporus (strain ATCC 11503 / CBS 2605 / JCM 1781 / NBRC 1676 / NRRL YB-4239) (Yeast) protein is Translation factor GUF1, mitochondrial.